The chain runs to 244 residues: Adenosylcobinamide-GDP ribazoletransferase (244 aa).

5 helical membrane-spanning segments follow: residues 33–53, 57–77, 109–129, 132–152, and 176–196; these read WFAV…WLGA, PWLA…GLHL, FAVI…MLAV, GVGW…AVWW, and FWLS…VLLL.

The protein belongs to the CobS family. Mg(2+) is required as a cofactor.

It localises to the cell inner membrane. It catalyses the reaction alpha-ribazole + adenosylcob(III)inamide-GDP = adenosylcob(III)alamin + GMP + H(+). It carries out the reaction alpha-ribazole 5'-phosphate + adenosylcob(III)inamide-GDP = adenosylcob(III)alamin 5'-phosphate + GMP + H(+). The protein operates within cofactor biosynthesis; adenosylcobalamin biosynthesis; adenosylcobalamin from cob(II)yrinate a,c-diamide: step 7/7. In terms of biological role, joins adenosylcobinamide-GDP and alpha-ribazole to generate adenosylcobalamin (Ado-cobalamin). Also synthesizes adenosylcobalamin 5'-phosphate from adenosylcobinamide-GDP and alpha-ribazole 5'-phosphate. This Laribacter hongkongensis (strain HLHK9) protein is Adenosylcobinamide-GDP ribazoletransferase.